A 138-amino-acid chain; its full sequence is uncharacterized protein (138 aa).

Positions 1 to 35 (MVAPAARVFLRAVRAALTSTVPDLLCLLARGSPRG) are cleaved as a signal peptide.

In terms of tissue distribution, isoform 1 is highly expressed in small intestine, testis and kidney, medium expressed in brain and heart and low expressed in colon; it could not be detected in liver, adrenal gland and pancreas.

Its subcellular location is the secreted. This is an uncharacterized protein from Homo sapiens (Human).